A 314-amino-acid polypeptide reads, in one-letter code: Aspartate carbamoyltransferase catalytic subunit (314 aa).

Carbamoyl phosphate-binding residues include Arg53 and Thr54. Lys82 serves as a coordination point for L-aspartate. Carbamoyl phosphate contacts are provided by Arg103, His131, and Gln134. Positions 164 and 230 each coordinate L-aspartate. Residues Leu267 and Pro268 each contribute to the carbamoyl phosphate site.

It belongs to the aspartate/ornithine carbamoyltransferase superfamily. ATCase family. As to quaternary structure, heterooligomer of catalytic and regulatory chains.

It catalyses the reaction carbamoyl phosphate + L-aspartate = N-carbamoyl-L-aspartate + phosphate + H(+). It participates in pyrimidine metabolism; UMP biosynthesis via de novo pathway; (S)-dihydroorotate from bicarbonate: step 2/3. In terms of biological role, catalyzes the condensation of carbamoyl phosphate and aspartate to form carbamoyl aspartate and inorganic phosphate, the committed step in the de novo pyrimidine nucleotide biosynthesis pathway. This Methanococcus aeolicus (strain ATCC BAA-1280 / DSM 17508 / OCM 812 / Nankai-3) protein is Aspartate carbamoyltransferase catalytic subunit.